The sequence spans 99 residues: MGISKKSQVSRELDTDGKKFIFAKTSIRASLKPVKTKLIKPERESEDGICITPTARGAKTPECPAAPRKRPPVLKCQNNIRIEYFVPPSDFELVFIQRR.

The interval 49–70 is disordered; sequence ICITPTARGAKTPECPAAPRKR.

As to expression, expressed in root meristems after induction.

Probable cyclin-dependent protein kinase (CDK) inhibitor that functions as a repressor of mitosis in the endoreduplication cell cycle. Acts as a potent cell cycle inhibitor, regulating a hydroxyurea-dependent checkpoint in leaves. The sequence is that of Cyclin-dependent protein kinase inhibitor SMR7 from Arabidopsis thaliana (Mouse-ear cress).